We begin with the raw amino-acid sequence, 185 residues long: uncharacterized protein (185 aa).

3 consecutive transmembrane segments (helical) span residues 9 to 29, 72 to 92, and 111 to 131; these read LVAA…WAFL, VLFF…ILIV, and FFFI…IPFL.

It localises to the cell membrane. This is an uncharacterized protein from Bacillus subtilis (strain 168).